The following is a 277-amino-acid chain: Anamorsin homolog (277 aa).

The interval 1 to 160 is N-terminal SAM-like domain; the sequence is MDTKRMLQNS…NIGSSFALKK (160 aa). The segment at 161–188 is linker; it reads SIKSPVKVQNDDYSDLIDEDSLLTEEDL. Residues C199, C208, C211, and C213 each coordinate [2Fe-2S] cluster. The fe-S binding site A stretch occupies residues 199–213; it reads CEVGSTRKACKNCTC. The [4Fe-4S] cluster site is built by C238, C241, C249, and C252. 2 consecutive short sequence motifs (cx2C motif) follow at residues 238-241 and 249-252; these read CGSC and CGTC. Positions 238–252 are fe-S binding site B; the sequence is CGSCGLGDAFRCGTC.

This sequence belongs to the anamorsin family. As to quaternary structure, monomer. Requires [2Fe-2S] cluster as cofactor. [4Fe-4S] cluster serves as cofactor.

It localises to the cytoplasm. Its subcellular location is the mitochondrion intermembrane space. Component of the cytosolic iron-sulfur (Fe-S) protein assembly (CIA) machinery. Required for the maturation of extramitochondrial Fe-S proteins. Part of an electron transfer chain functioning in an early step of cytosolic Fe-S biogenesis, facilitating the de novo assembly of a [4Fe-4S] cluster on the cytosolic Fe-S scaffold complex. Electrons are transferred from NADPH via a FAD- and FMN-containing diflavin oxidoreductase. Together with the diflavin oxidoreductase, also required for the assembly of the diferric tyrosyl radical cofactor of ribonucleotide reductase (RNR), probably by providing electrons for reduction during radical cofactor maturation in the catalytic small subunit. In Populus trichocarpa (Western balsam poplar), this protein is Anamorsin homolog.